A 144-amino-acid chain; its full sequence is Large ribosomal subunit protein uL11 (144 aa).

The protein belongs to the universal ribosomal protein uL11 family. As to quaternary structure, part of the ribosomal stalk of the 50S ribosomal subunit. Interacts with L10 and the large rRNA to form the base of the stalk. L10 forms an elongated spine to which L12 dimers bind in a sequential fashion forming a multimeric L10(L12)X complex. Post-translationally, one or more lysine residues are methylated.

Functionally, forms part of the ribosomal stalk which helps the ribosome interact with GTP-bound translation factors. The chain is Large ribosomal subunit protein uL11 from Saccharopolyspora erythraea (strain ATCC 11635 / DSM 40517 / JCM 4748 / NBRC 13426 / NCIMB 8594 / NRRL 2338).